Here is a 464-residue protein sequence, read N- to C-terminus: Glutathione reductase (464 aa).

Residues S17 and G18 each coordinate FAD. S17 contributes to the glutathione binding site. A glutathione-binding site is contributed by R24. Residues E37, T45, C46, and K54 each contribute to the FAD site. A disulfide bridge connects residues C46 and C51. Y103 contacts glutathione. A119 is a binding site for FAD. A186, I189, E192, R209, R215, and G274 together coordinate NADP(+). Residue D315 participates in FAD binding. E321 is an NADP(+) binding site. T323 contributes to the FAD binding site. A glutathione-binding site is contributed by R331. V354 provides a ligand contact to NADP(+). H453 contacts FAD. The Proton acceptor role is filled by H453.

Belongs to the class-I pyridine nucleotide-disulfide oxidoreductase family. Homodimer. FAD serves as cofactor.

Its subcellular location is the cytoplasm. It localises to the mitochondrion. The catalysed reaction is 2 glutathione + NADP(+) = glutathione disulfide + NADPH + H(+). Functionally, catalyzes the reduction of glutathione disulfide (GSSG) to reduced glutathione (GSH). Constitutes the major mechanism to maintain a high GSH:GSSG ratio in the cytosol. This Schizosaccharomyces pombe (strain 972 / ATCC 24843) (Fission yeast) protein is Glutathione reductase (pgr1).